We begin with the raw amino-acid sequence, 405 residues long: BRCA1-A complex subunit Abraxas 1 (405 aa).

Residues 7 to 153 form the MPN domain; it reads SALLSGFVFG…CSTYRLEHAL (147 aa). Residues 208-262 are a coiled coil; the sequence is SLQEVHKINEMYATLQEELKKMCSDVEVSERSVEKLLTEVSQLKEEINRKKQHKI. Positions 365–405 are disordered; it reads LHQDEEDCNQETKLALSSAETDEEALENPKDTNEYSYSPTF. Serine 402 is subject to Phosphoserine. The pSXXF motif signature appears at 402-405; it reads SPTF.

The protein belongs to the FAM175 family. Abraxas subfamily. Component of the BRCA1-A complex. Component of the BRISC complex. Homodimer. Interacts directly (when phosphorylated at Ser-402) with BRCA1. The phosphorylated homodimer can interact directly with two BRCA1 chains, giving rise to a heterotetramer. In terms of processing, phosphorylation of Ser-402 of the pSXXF motif by ATM or ATR constitutes a specific recognition motif for the BRCT domain of BRCA1.

The protein resides in the nucleus. Functionally, involved in DNA damage response and double-strand break (DSB) repair. Component of the BRCA1-A complex, acting as a central scaffold protein that assembles the various components of the complex and mediates the recruitment of BRCA1. The BRCA1-A complex specifically recognizes 'Lys-63'-linked ubiquitinated histones H2A and H2AX at DNA lesion sites, leading to target the BRCA1-BARD1 heterodimer to sites of DNA damage at DSBs. This complex also possesses deubiquitinase activity that specifically removes 'Lys-63'-linked ubiquitin on histones H2A and H2AX. This is BRCA1-A complex subunit Abraxas 1 from Gallus gallus (Chicken).